We begin with the raw amino-acid sequence, 161 residues long: Transcriptional repressor NrdR (161 aa).

Over residues 1–11 the composition is skewed to basic residues; it reads MQCPHCQHHNS. Positions 1–21 are disordered; it reads MQCPHCQHHNSRVLESRSSEG. Residues 3-34 fold into a zinc finger; it reads CPHCQHHNSRVLESRSSEGGQSIRRRRECLEC. The ATP-cone domain maps to 49–139; sequence VTVIKQDGER…VYGRFQGIAD (91 aa).

Belongs to the NrdR family. Requires Zn(2+) as cofactor.

Its function is as follows. Negatively regulates transcription of bacterial ribonucleotide reductase nrd genes and operons by binding to NrdR-boxes. The protein is Transcriptional repressor NrdR of Synechocystis sp. (strain ATCC 27184 / PCC 6803 / Kazusa).